The primary structure comprises 552 residues: Probable inorganic phosphate transporter 1-10 (552 aa).

The Cytoplasmic portion of the chain corresponds to methionine 1 to alanine 22. A helical transmembrane segment spans residues isoleucine 23 to valine 43. Topologically, residues methionine 44–serine 68 are extracellular. A helical transmembrane segment spans residues alanine 69–glycine 89. The Cytoplasmic segment spans residues aspartate 90–arginine 96. Residues valine 97–cysteine 117 traverse the membrane as a helical segment. Residues arginine 118–alanine 123 lie on the Extracellular side of the membrane. The helical transmembrane segment at leucine 124–leucine 144 threads the bilayer. Topologically, residues serine 145–arginine 158 are cytoplasmic. Residues glycine 159–valine 179 form a helical membrane-spanning segment. The Extracellular portion of the chain corresponds to threonine 180 to alanine 203. A helical transmembrane segment spans residues aspartate 204–tryptophan 224. Over arginine 225–aspartate 295 the chain is Cytoplasmic. Residues leucine 296–phenylalanine 316 form a helical membrane-spanning segment. The Extracellular portion of the chain corresponds to glutamine 317 to lysine 342. A helical transmembrane segment spans residues phenylalanine 343–isoleucine 363. Over aspartate 364–arginine 369 the chain is Cytoplasmic. Residues cysteine 370 to tyrosine 390 traverse the membrane as a helical segment. The Extracellular segment spans residues aspartate 391–histidine 397. Residues glycine 398–proline 418 form a helical membrane-spanning segment. Topologically, residues asparagine 419 to histidine 439 are cytoplasmic. A helical membrane pass occupies residues glycine 440–alanine 460. Over serine 461–proline 473 the chain is Extracellular. The helical transmembrane segment at glycine 474 to leucine 494 threads the bilayer. At threonine 495 to valine 552 the chain is on the cytoplasmic side. Positions leucine 507–leucine 540 are disordered.

The protein belongs to the major facilitator superfamily. Phosphate:H(+) symporter (TC 2.A.1.9) family. Expressed at low levels in roots.

Its subcellular location is the membrane. Functionally, high-affinity transporter for external inorganic phosphate. The chain is Probable inorganic phosphate transporter 1-10 (PHT1-10) from Oryza sativa subsp. japonica (Rice).